Consider the following 525-residue polypeptide: Ribonuclease Y (525 aa).

The chain crosses the membrane as a helical span at residues 3–23; sequence IFFISLVLIVLASVVFFVGGF. The KH domain maps to 215 to 300; sequence ALSVVHIQSD…KAYEDAKKEI (86 aa). One can recognise an HD domain in the interval 341-433; sequence LLQHSREVAM…VDAANVISLS (93 aa).

Belongs to the RNase Y family.

It is found in the cell membrane. Its function is as follows. Endoribonuclease that initiates mRNA decay. This is Ribonuclease Y from Chlorobium phaeobacteroides (strain DSM 266 / SMG 266 / 2430).